A 26-amino-acid polypeptide reads, in one-letter code: MTDCRYLIKRVIKIIIAVLQLILLFL.

Residues 7–24 traverse the membrane as a helical segment; that stretch reads LIKRVIKIIIAVLQLILL.

Its subcellular location is the membrane. Toxic component of a type I toxin-antitoxin (TA) system. May be a toxic protein; overexpression causes cessation of growth and rapid membrane depolarization. Overexpression induces stress-response and a number of membrane protein genes. This is Small toxic protein ShoB (shoB) from Escherichia coli (strain K12).